The sequence spans 169 residues: Probable NADH dehydrogenase [ubiquinone] 1 alpha subcomplex subunit 5, mitochondrial (169 aa).

Residues 1-11 (MFLRAIGRPLL) constitute a mitochondrion transit peptide.

It belongs to the complex I NDUFA5 subunit family. In terms of assembly, complex I is composed of at least 49 different subunits.

The protein localises to the mitochondrion inner membrane. In terms of biological role, accessory subunit of the mitochondrial membrane respiratory chain NADH dehydrogenase (Complex I), that is believed not to be involved in catalysis. Complex I functions in the transfer of electrons from NADH to the respiratory chain. The immediate electron acceptor for the enzyme is believed to be ubiquinone. The chain is Probable NADH dehydrogenase [ubiquinone] 1 alpha subcomplex subunit 5, mitochondrial from Arabidopsis thaliana (Mouse-ear cress).